Consider the following 173-residue polypeptide: Bifunctional protein PyrR (173 aa).

A PRPP-binding motif is present at residues V93–T105.

This sequence belongs to the purine/pyrimidine phosphoribosyltransferase family. PyrR subfamily. In terms of assembly, homodimer and homohexamer; in equilibrium.

It carries out the reaction UMP + diphosphate = 5-phospho-alpha-D-ribose 1-diphosphate + uracil. In terms of biological role, regulates transcriptional attenuation of the pyrimidine nucleotide (pyr) operon by binding in a uridine-dependent manner to specific sites on pyr mRNA. This disrupts an antiterminator hairpin in the RNA and favors formation of a downstream transcription terminator, leading to a reduced expression of downstream genes. Also displays a weak uracil phosphoribosyltransferase activity which is not physiologically significant. The sequence is that of Bifunctional protein PyrR from Streptococcus pyogenes serotype M12 (strain MGAS2096).